The chain runs to 254 residues: Adenosine 5'-phosphosulfate reductase (254 aa).

The [4Fe-4S] cluster site is built by Cys-131, Cys-132, Cys-212, and Cys-215. The active-site Nucleophile; cysteine thiosulfonate intermediate is Cys-238.

Belongs to the PAPS reductase family. CysH subfamily. [4Fe-4S] cluster serves as cofactor.

The protein resides in the cytoplasm. The enzyme catalyses [thioredoxin]-disulfide + sulfite + AMP + 2 H(+) = adenosine 5'-phosphosulfate + [thioredoxin]-dithiol. It participates in sulfur metabolism; hydrogen sulfide biosynthesis; sulfite from sulfate. Its function is as follows. Catalyzes the formation of sulfite from adenosine 5'-phosphosulfate (APS) using thioredoxin as an electron donor. The chain is Adenosine 5'-phosphosulfate reductase from Mesorhizobium japonicum (strain LMG 29417 / CECT 9101 / MAFF 303099) (Mesorhizobium loti (strain MAFF 303099)).